Here is a 95-residue protein sequence, read N- to C-terminus: Aspartyl/glutamyl-tRNA(Asn/Gln) amidotransferase subunit C (95 aa).

It belongs to the GatC family. Heterotrimer of A, B and C subunits.

The catalysed reaction is L-glutamyl-tRNA(Gln) + L-glutamine + ATP + H2O = L-glutaminyl-tRNA(Gln) + L-glutamate + ADP + phosphate + H(+). It carries out the reaction L-aspartyl-tRNA(Asn) + L-glutamine + ATP + H2O = L-asparaginyl-tRNA(Asn) + L-glutamate + ADP + phosphate + 2 H(+). Its function is as follows. Allows the formation of correctly charged Asn-tRNA(Asn) or Gln-tRNA(Gln) through the transamidation of misacylated Asp-tRNA(Asn) or Glu-tRNA(Gln) in organisms which lack either or both of asparaginyl-tRNA or glutaminyl-tRNA synthetases. The reaction takes place in the presence of glutamine and ATP through an activated phospho-Asp-tRNA(Asn) or phospho-Glu-tRNA(Gln). The polypeptide is Aspartyl/glutamyl-tRNA(Asn/Gln) amidotransferase subunit C (Methylobacterium sp. (strain 4-46)).